The sequence spans 253 residues: uncharacterized protein (253 aa).

Residue 10-35 (ISGAASKRGIGRATAELFASHGARVA) coordinates NADP(+). S144 contacts substrate. The Proton acceptor role is filled by Y159.

The protein belongs to the short-chain dehydrogenases/reductases (SDR) family.

This is an uncharacterized protein from Sinorhizobium fredii (strain NBRC 101917 / NGR234).